The sequence spans 223 residues: Ribosome maturation factor RimM (223 aa).

The PRC barrel domain occupies 142-223 (ADEFYWVDLI…RIVVDWEADY (82 aa)).

It belongs to the RimM family. As to quaternary structure, binds ribosomal protein uS19.

Its subcellular location is the cytoplasm. Its function is as follows. An accessory protein needed during the final step in the assembly of 30S ribosomal subunit, possibly for assembly of the head region. Essential for efficient processing of 16S rRNA. May be needed both before and after RbfA during the maturation of 16S rRNA. It has affinity for free ribosomal 30S subunits but not for 70S ribosomes. The chain is Ribosome maturation factor RimM from Burkholderia multivorans (strain ATCC 17616 / 249).